A 287-amino-acid chain; its full sequence is Small ribosomal subunit biogenesis GTPase RsgA (287 aa).

A CP-type G domain is found at 61–218 (SSELIRPTVA…LVDTPGFTTL (158 aa)). Residues 110–113 (NKED) and 161–169 (GPSGAGKST) each bind GTP. Positions 242, 247, 249, and 255 each coordinate Zn(2+).

The protein belongs to the TRAFAC class YlqF/YawG GTPase family. RsgA subfamily. As to quaternary structure, monomer. Associates with 30S ribosomal subunit, binds 16S rRNA. Zn(2+) is required as a cofactor.

The protein localises to the cytoplasm. In terms of biological role, one of several proteins that assist in the late maturation steps of the functional core of the 30S ribosomal subunit. Helps release RbfA from mature subunits. May play a role in the assembly of ribosomal proteins into the subunit. Circularly permuted GTPase that catalyzes slow GTP hydrolysis, GTPase activity is stimulated by the 30S ribosomal subunit. The sequence is that of Small ribosomal subunit biogenesis GTPase RsgA from Clostridium perfringens (strain SM101 / Type A).